Reading from the N-terminus, the 355-residue chain is Ubiquinone biosynthesis protein COQ4 homolog, mitochondrial (355 aa).

Positions 134, 135, 138, and 150 each coordinate Zn(2+).

It belongs to the COQ4 family. In terms of assembly, component of a multi-subunit COQ enzyme complex. Zn(2+) serves as cofactor.

It localises to the mitochondrion inner membrane. The catalysed reaction is a 4-hydroxy-3-methoxy-5-(all-trans-polyprenyl)benzoate + H(+) = a 2-methoxy-6-(all-trans-polyprenyl)phenol + CO2. It participates in cofactor biosynthesis; ubiquinone biosynthesis. In terms of biological role, lyase that catalyzes the C1-decarboxylation of 4-hydroxy-3-methoxy-5-(all-trans-polyprenyl)benzoic acid into 2-methoxy-6-(all-trans-polyprenyl)phenol during ubiquinone biosynthesis. The polypeptide is Ubiquinone biosynthesis protein COQ4 homolog, mitochondrial (Plasmodium chabaudi chabaudi).